Reading from the N-terminus, the 95-residue chain is Small ribosomal subunit protein bS16 (95 aa).

Belongs to the bacterial ribosomal protein bS16 family.

This Roseiflexus sp. (strain RS-1) protein is Small ribosomal subunit protein bS16.